The sequence spans 264 residues: Thymidylate synthase (264 aa).

Arg-21 lines the dUMP pocket. His-51 provides a ligand contact to (6R)-5,10-methylene-5,6,7,8-tetrahydrofolate. Residue 126-127 (RR) participates in dUMP binding. The active-site Nucleophile is Cys-146. DUMP contacts are provided by residues 166 to 169 (RSCD), Asn-177, and 207 to 209 (HLY). Position 169 (Asp-169) interacts with (6R)-5,10-methylene-5,6,7,8-tetrahydrofolate. A (6R)-5,10-methylene-5,6,7,8-tetrahydrofolate-binding site is contributed by Ala-263.

The protein belongs to the thymidylate synthase family. Bacterial-type ThyA subfamily. Homodimer.

It is found in the cytoplasm. The enzyme catalyses dUMP + (6R)-5,10-methylene-5,6,7,8-tetrahydrofolate = 7,8-dihydrofolate + dTMP. It functions in the pathway pyrimidine metabolism; dTTP biosynthesis. In terms of biological role, catalyzes the reductive methylation of 2'-deoxyuridine-5'-monophosphate (dUMP) to 2'-deoxythymidine-5'-monophosphate (dTMP) while utilizing 5,10-methylenetetrahydrofolate (mTHF) as the methyl donor and reductant in the reaction, yielding dihydrofolate (DHF) as a by-product. This enzymatic reaction provides an intracellular de novo source of dTMP, an essential precursor for DNA biosynthesis. This is Thymidylate synthase from Buchnera aphidicola subsp. Baizongia pistaciae (strain Bp).